Reading from the N-terminus, the 273-residue chain is 4-hydroxy-tetrahydrodipicolinate reductase (273 aa).

12 to 17 (GAGGRM) contacts NAD(+). Residue Arg39 coordinates NADP(+). Residues 102–104 (GTT) and 126–129 (AANF) each bind NAD(+). His159 serves as the catalytic Proton donor/acceptor. (S)-2,3,4,5-tetrahydrodipicolinate is bound at residue His160. The Proton donor role is filled by Lys163. A (S)-2,3,4,5-tetrahydrodipicolinate-binding site is contributed by 169–170 (GT).

Belongs to the DapB family. Homotetramer.

The protein localises to the cytoplasm. It carries out the reaction (S)-2,3,4,5-tetrahydrodipicolinate + NAD(+) + H2O = (2S,4S)-4-hydroxy-2,3,4,5-tetrahydrodipicolinate + NADH + H(+). The catalysed reaction is (S)-2,3,4,5-tetrahydrodipicolinate + NADP(+) + H2O = (2S,4S)-4-hydroxy-2,3,4,5-tetrahydrodipicolinate + NADPH + H(+). It functions in the pathway amino-acid biosynthesis; L-lysine biosynthesis via DAP pathway; (S)-tetrahydrodipicolinate from L-aspartate: step 4/4. Its function is as follows. Catalyzes the conversion of 4-hydroxy-tetrahydrodipicolinate (HTPA) to tetrahydrodipicolinate. This chain is 4-hydroxy-tetrahydrodipicolinate reductase, found in Sodalis glossinidius (strain morsitans).